We begin with the raw amino-acid sequence, 79 residues long: RNA-binding protein KhpA (79 aa).

Residues 32–79 (TVVIELRVDPAELGKVIGKQGRIARALRTILTAIGRKIGKRVVLEILE) enclose the KH domain.

It belongs to the KhpA RNA-binding protein family.

It localises to the cytoplasm. Its function is as follows. A probable RNA-binding protein. This is RNA-binding protein KhpA from Aquifex aeolicus (strain VF5).